The chain runs to 366 residues: Peptide chain release factor 2 (366 aa).

Position 253 is an N5-methylglutamine (Gln-253).

The protein belongs to the prokaryotic/mitochondrial release factor family. Methylated by PrmC. Methylation increases the termination efficiency of RF2.

It localises to the cytoplasm. In terms of biological role, peptide chain release factor 2 directs the termination of translation in response to the peptide chain termination codons UGA and UAA. The protein is Peptide chain release factor 2 of Yersinia pestis.